The following is a 216-amino-acid chain: ATP-dependent Clp protease proteolytic subunit (216 aa).

Catalysis depends on S101, which acts as the Nucleophile. H126 is a catalytic residue.

This sequence belongs to the peptidase S14 family. As to quaternary structure, component of the chloroplastic Clp protease core complex.

The protein resides in the plastid. It is found in the chloroplast stroma. It catalyses the reaction Hydrolysis of proteins to small peptides in the presence of ATP and magnesium. alpha-casein is the usual test substrate. In the absence of ATP, only oligopeptides shorter than five residues are hydrolyzed (such as succinyl-Leu-Tyr-|-NHMec, and Leu-Tyr-Leu-|-Tyr-Trp, in which cleavage of the -Tyr-|-Leu- and -Tyr-|-Trp bonds also occurs).. In terms of biological role, cleaves peptides in various proteins in a process that requires ATP hydrolysis. Has a chymotrypsin-like activity. Plays a major role in the degradation of misfolded proteins. The protein is ATP-dependent Clp protease proteolytic subunit of Oryza nivara (Indian wild rice).